The primary structure comprises 578 residues: Glycosyltransferase family 92 protein RCOM_0530710 (578 aa).

The chain crosses the membrane as a helical span at residues serine 21–serine 43. In terms of domain architecture, GT92 spans tyrosine 295–proline 531.

The protein belongs to the glycosyltransferase 92 family.

The protein resides in the membrane. In Ricinus communis (Castor bean), this protein is Glycosyltransferase family 92 protein RCOM_0530710.